Here is a 214-residue protein sequence, read N- to C-terminus: uncharacterized protein (214 aa).

Residues 131–214 (TEDILSPPSP…SSSSDSLDAY (84 aa)) are disordered. Basic residues predominate over residues 174–189 (HRRRRTRRQLRYRQRV). Positions 197-214 (DLGEPLESSSSSDSLDAY) are enriched in low complexity.

This is an uncharacterized protein from Tupaia.